Consider the following 244-residue polypeptide: tRNA pseudouridine synthase A (244 aa).

Asp-52 serves as the catalytic Nucleophile. Substrate is bound at residue Tyr-110.

This sequence belongs to the tRNA pseudouridine synthase TruA family. Homodimer.

It catalyses the reaction uridine(38/39/40) in tRNA = pseudouridine(38/39/40) in tRNA. Functionally, formation of pseudouridine at positions 38, 39 and 40 in the anticodon stem and loop of transfer RNAs. This is tRNA pseudouridine synthase A from Geotalea daltonii (strain DSM 22248 / JCM 15807 / FRC-32) (Geobacter daltonii).